Here is a 401-residue protein sequence, read N- to C-terminus: UDP-N-acetylglucosamine--N-acetylmuramyl-(pentapeptide) pyrophosphoryl-undecaprenol N-acetylglucosamine transferase (401 aa).

Positions 1 to 24 are disordered; sequence MTRISVPAGQERNDGGISVPAGQE. UDP-N-acetyl-alpha-D-glucosamine contacts are provided by residues 39–41, N157, R194, S228, and Q324; that span reads TAG.

This sequence belongs to the glycosyltransferase 28 family. MurG subfamily.

It localises to the cell membrane. It catalyses the reaction di-trans,octa-cis-undecaprenyl diphospho-N-acetyl-alpha-D-muramoyl-L-alanyl-D-glutamyl-meso-2,6-diaminopimeloyl-D-alanyl-D-alanine + UDP-N-acetyl-alpha-D-glucosamine = di-trans,octa-cis-undecaprenyl diphospho-[N-acetyl-alpha-D-glucosaminyl-(1-&gt;4)]-N-acetyl-alpha-D-muramoyl-L-alanyl-D-glutamyl-meso-2,6-diaminopimeloyl-D-alanyl-D-alanine + UDP + H(+). It functions in the pathway cell wall biogenesis; peptidoglycan biosynthesis. Functionally, cell wall formation. Catalyzes the transfer of a GlcNAc subunit on undecaprenyl-pyrophosphoryl-MurNAc-pentapeptide (lipid intermediate I) to form undecaprenyl-pyrophosphoryl-MurNAc-(pentapeptide)GlcNAc (lipid intermediate II). This chain is UDP-N-acetylglucosamine--N-acetylmuramyl-(pentapeptide) pyrophosphoryl-undecaprenol N-acetylglucosamine transferase, found in Mycolicibacterium vanbaalenii (strain DSM 7251 / JCM 13017 / BCRC 16820 / KCTC 9966 / NRRL B-24157 / PYR-1) (Mycobacterium vanbaalenii).